A 414-amino-acid polypeptide reads, in one-letter code: Glycogen synthase (414 aa).

This sequence belongs to the glycosyltransferase group 1 family.

The enzyme catalyses [(1-&gt;4)-alpha-D-glucosyl](n) + UDP-alpha-D-glucose = [(1-&gt;4)-alpha-D-glucosyl](n+1) + UDP + H(+). It functions in the pathway glycan biosynthesis; glycogen biosynthesis. In terms of biological role, glucosyltransferase that uses UDP-glucose as the sugar donor to elongate alpha-(1-&gt;4)-glucans. Is involved in the biosynthesis of both 6-O-methylglucosyl lipopolysaccharides (MGLP) and glycogen. May also use ADP-glucose as substrate. The chain is Glycogen synthase from Mycobacterium tuberculosis (strain CDC 1551 / Oshkosh).